The primary structure comprises 580 residues: Acyl-coenzyme A synthetase ACSM3, mitochondrial (580 aa).

The transit peptide at 1–21 (MVMLLRARCFQRLAIPDPMRV) directs the protein to the mitochondrion. K67 and K100 each carry N6-succinyllysine. K151 is subject to N6-acetyllysine. ATP contacts are provided by residues 229-237 (TSGTTGPPK), 368-373 (EGYGQT), D455, R470, and K566.

The protein belongs to the ATP-dependent AMP-binding enzyme family. It depends on Mg(2+) as a cofactor. The cofactor is Mn(2+). As to expression, detected in kidney (at protein level). Detected in kidney proximal tubules and in liver. Detected at low levels in testis, stomach, heart and lung.

The protein resides in the mitochondrion. It localises to the mitochondrion matrix. The catalysed reaction is a medium-chain fatty acid + ATP + CoA = a medium-chain fatty acyl-CoA + AMP + diphosphate. The enzyme catalyses propanoate + ATP + CoA = propanoyl-CoA + AMP + diphosphate. It carries out the reaction butanoate + ATP + CoA = butanoyl-CoA + AMP + diphosphate. It catalyses the reaction 2-methylpropanoate + ATP + CoA = 2-methylpropanoyl-CoA + AMP + diphosphate. The catalysed reaction is 2-methylbutanoate + ATP + CoA = 2-methylbutanoyl-CoA + AMP + diphosphate. The enzyme catalyses octanoate + ATP + CoA = octanoyl-CoA + AMP + diphosphate. Catalyzes the activation of fatty acids by CoA to produce an acyl-CoA, the first step in fatty acid metabolism. Capable of activating medium-chain fatty acids with a preference for isobutyrate among fatty acids with 2-6 carbon atoms. The sequence is that of Acyl-coenzyme A synthetase ACSM3, mitochondrial (Acsm3) from Mus musculus (Mouse).